Here is a 5596-residue protein sequence, read N- to C-terminus: MEHFLLEVAAAPLRLIAAKNEKSRSELGRFLAKQVWTPQDRQCVLSTLAQLLLDKDCTVLVGRQLRPLLLDLLERNAEAIKAGGQINHDLHERLCVSMSKLIGNHPDVLPFALRYFKDTSPVFQRLFLESSDANPVRYGRRRMKLRDLMEAAFKFLQQEQSVFRELWDWSVCVPLLRSHDTLVRWYTANCLALVTCMNEEHKLSFLKKIFNSDELIHFRLRLLEEAQLQDLEKALVLANPEVSLWRKQKELQYLQGHLVSSDLSPRVTAVCGVVLPGQLPAPGELGGNRSSSREQELALRSYVLVESVCKSLQTLAMAVASQNAVLLEGPIGCGKTSLVEYLAAVTGRTKPPQLLKVQLGDQTDSKMLLGMYRCTDVPGEFVWQPGTLTQAATMGHWILLEDIDYAPLDVVSVLIPLLENGELLIPGRGDCLKVAPGFQFFATRRLLSCGGNWYRPLNSHATLLDKYWTKIHLDNLDKRELNEVLQSRYPSLLAVVDHLLDIYIQLTGEKHHSWSDSSVGCEQAPEEVSEARRENKRPTLEGRELSLRDLLNWCNRIAHSFDSSSLSASLNIFQEALDCFTAMLSEHTSKLKMAEVIGSKLNISRKKAEFFCQLYKPEIVINELDLQVGRVRLLRKQSEAVHLQREKFTFAATRPSSVLIEQLAVCVSKGEPVLLVGETGTGKTSTIQYLAHITGHRLRVVNMNQQSDTADLLGGYKPVDHKLIWLPLREAFEELFAQTFSKKQNFTFLGHIQTCYRQKRWHDLLRLMQHVHKSAVNKDGKDSETGLLIKEKWEAFGLRLNHAQQQMKMTENTLLFAFVEGTLAQAVKKGEWILLDEINLAAPEILECLSGLLEGSSGSLVLLDRGDTEPLVRHPDFRLFACMNPATDVGKRNLPPGIRNRFTELYVEELESKEDLQVLIVDYLKGLSVNKNTVQGIINFYTALRKESGTKLVDGTGHRPHYSLRTLCRALRFAASNPCGNIQRSLYEGFCLGFLTQLDRASHPIVQKLICQHIVPGNVKSLLKQPIPEPKGGRLIQVEGYWIAVGDKEPTIDETYILTSSVKLNLRDIVRVVSAGTYPVLIQGETSVGKTSLIQWLAAATGNHCVRINNHEHTDIQEYIGCYTSDSSGKLVFKEGVLIDAMRKGYWIILDELNLAPTDVLEALNRLLDDNRELLVTETQEVVKAHPRFMLFATQNPPGLYGGRKVLSRAFRNRFVELHFDELPSSELETILHKRCSLPPSYCSKLVKVMLDLQSYRRSSSVFAGKQGFITLRDLFRWAERYRLAEPTEKEYDWLQHLANDGYMLLAGRVRKQEEIDVIQEVLEKHFKKKLCPQSLFSKENVLKLLGKLSTQISTLECNFGHIVWTEGMRRLAMLVGRALEFGEPVLLVGDTGCGKTTICQVFAALANQKLYSVSCHLHMETSDFLGGLRPVRQKPNDKEEIDTSRLFEWHDGPLVQAMKEDGFFLLDEISLADDSVLERLNSVLEVEKSLVLAEKGSPEDKDSEIELLTAGKKFRILATMNPGGDFGKKELSPALRNRFTEIWCPQSTSREDLIQIISHNLRPGLCLGRIDPKGSDIPEVMLDFIDWLTHQEFGRKCVVSIRDILSWVNFMNKMGEEAALKRPEIISTVTSFVHAACLVYIDGIGSGVTSSGFGTALLARKECLKFLIKRLAKIVRLTEYQKNELKIYDRMKAKEFTGIDNLWGIHPFFIPRGPVLHRNNIADYALSAGTTAMNAQRLLRATKLKKPILLEGSPGVGKTSLVGALAKASGNTLVRINLSEQTDITDLFGADLPVEGGKGGEFAWRDGPLLAALKAGHWVVLDELNLASQSVLEGLNACFDHRGEIYVPELGMSFQVQHEKTKIFGCQNPFRQGGGRKGLPRSFLNRFTQVFVDPLTVIDMEFIASTLFPAIEKNIVKKMVAFNNQIDHEVTVEKKWGQKGGPWEFNLRDLFRWCQLMLVDQSPGCYDPGQHVFLVYGERMRTEEDKKKVIAVFKDVFGSNSNPYMGTRLFRITPYDVQLGYSVLSRGSCVPHPSRHPLLLLHQSFQPLESIMKCVQMSWMVILVGPASVGKTSLVQLLAHLTGHTLKIMAMNSAMDTTELLGGFEQVDLIRPWRRLLEKVEGTVRALLRDSLLISADDAEVVLRAWSHFLLTYKPKCLGEGGKAITMEIVNKLEAVLLLMQRLNNKINSYCKAEFAKLVEEFRSFGVKLTQLASGHSHGTFEWVDSMLVQALKSGDWLLMDNVNFCNPSVLDRLNALLEPGGVLTISERGMIDGSTPTITPNPNFRLFLSMDPVHGDISRAMRNRGLEIYISGEGDASTPDNLDLKVLLHSLGLVGNSVCDILLALHTETRSTVVGSPTSSVSTLIQTAILIVQYLQRGLSLDRAFSEACWEVYVCSQHSPANRKLVQALLEKHVSSLRAHETWGDSILGMGLWPDSVPSALFATEDSHLSTVRRDGQILVYCLNRMSMKTSSWTRSQPFTLQDLEKIMQSPSPENLKFNAVEVNTYWIDEPDVLVMAVKLLIERATNQDWMLRVKWLYHLAKNIPQGLESIQIHLEASAASLRNFYSHSLSGAVSNVFKILQPNTTDEFVIPLDPRWNMQALDMIRNLMDFDPQTDQPDQLFALLESAANKTIIYLDREKRVFTEANLVSVGSKKLRESVLRMSFEFHQDPESYHTLPHEIVVNLAAFFELCDALVLLWVQSSQGMVSDASANEILGSLRWRDRFWTVADTVKVDAPGLALLALHWHWVLKHLVHQIPRLLMNYEDKYYKEVQTVSEHIQNCLGSQTGGFAGIKKLQKFLGRPFPFKDKLVVECFSQLKVLNKVLAIREQMSALGESGWQEDINRLQVVASQWTLKKSLLQAWGLILRANILEDVSLDELKNFVHAQCLELKAKGLSLGFLEKKHDEASSLSHPDLTSVIHLTRSVQLWPAMEYLAMLWRYKVTADFMAQACLRRCSKNQQPQINEEISHLISFCLYHTPVTPQELRDLWSLLHHQKVSPEEITSLWSELFNSMFMSFWSSTVTTNPEYWLMWNPLPGMQQREAPKSVLDSTLKGPGNLNRPIFSKCCFEVLTSSWRASPWDVSGLPILSSSHVTLGEWVERTQQLQDISSMLWTNMAISSVAEFRRTDSQLQGQVLFRHLAGLAELLPESRRQEYMQNCEQLLLGSSQAFQHVGQTLGDMAGQEVLPKELLCQLLTSLHHFVGEGESKRSLPEPAQRGSLWVSLGLLQIQTWLPQARFDPAVKREYKLNYVKEELHQLQCEWKTRNLSSQLQTGRDLEDEVVVSYSHPHVRLLRQRMDRLDNLTCHLLKKQAFRPQLPAYESLVQEIHHYVTSIAKAPAVQDLLTRLLQALHIDGPRSAQVAQSLLKEEASWQQSHHQFRKRLSEEYTFYPDAVSPLQASILQLQHGMRLVASELHTSLHSSMVGADRLGTLATALLAFPSVGPTFPTYYAHADTLCSVKSEEVLRGLGKLILKRSGGKELEGKGQKACPTREQLLMNALLYLRSHVLCKGELDQRALQLFRHVCQEIISEWDEQERIAQEKAEQESGLYRYRSRNSRTALSEEEEEEREFRKQFPLHEKDFADILVQPTLEENKGTSDGQEEEAGTNPALLSQNSMQAVMLIHQQLCLNFARSLWYQQTLPPHEAKHYLSLFLSCYQTGASLVTHFYPLMGVELNDRLLGSQLLACTLSHNTLFGEAPSDLMVKPDGPYDFYQHPNVPEARQCQPVLQGFSEAVSHLLQDWPEHPALEQLLVVMDRIRSFPLSSPISKFLNGLEILLAKAQDWEENASRALSLRKHLDLISQMIIRWRKLELNCWSMSLDNTMKRHTEKSTKHWFSIYQMLEKHMQEQTEEQEDDKQMTLMLLVSTLQAFIEGSSLGEFHVRLQMLLVFHCHVLLMPQVEGKDSLCSVLWNLYHYYKQFFDRVQAKIVELRSPLEKELKEFVKISKWNDVSFWSIKQSVEKTHRTLFKFMKKFEAVLSEPCRSSLVESDKEEQPDFLPRPTDGAASELSSIQNLNRALRETLLAQPAAGQATIPEWCQGAAPSGLEGELLRRLPKLRKRMRKMCLTFMKESPLPRLVEGLDQFTGEVISSVSELQSLKVEPSAEKEKQRSEAKHILMQKQRALSDLFKHLAKIGLSYRKGLAWARSKNPQEMLHLHPLDLQSALSIVSSTQEADSRLLTEISSSWDGCQKYFYRSLARHARLNAALATPAKEMGMGNVERCRGFSAHLMKMLVRQRRSLTTLSEQWIILRNLLSCVQEIHSRLMGPQAYPVAFPPQDGVQQWTERLQHLAMQCQILLEQLSWLLQCCPSVGPAPGHGNVQVLGQPPGPCLEGPELSKGQLCGVVLDLIPSNLSYPSPIPGSQLPSGCRMRKQDHLWQQSTTRLTEMLKTIKTVKADVDKIRQQSCETLFHSWKDFEVCSSALSCLSQVSVHLQGLESLFILPGMEVEQRDSQMALVESLEYVRGEISKAMADFTTWKTHLLTSDSQGGNQMLDEGFVEDFSEQMEIAIRAILCAIQNLEERKNEKAEENTDQASPQEDYAGFERLQSGHLTKLLEDDFWADVSTLHVQKIISAISELLERLKSYGEDGTAAKHLFFSQSCSLLVRLVPVLSSYSDLVLFFLTMSLATHRSTAKLLSVLAQVFTELAQKGFCLPKEFMEDSAGEGATEFHDYEGGGIGEGEGMKDVSDQIGNEEQVEDTFQKGQEKDKEDPDSKSDIKGEDNAIEMSEDFDGKMHDGELEEQEEDDEKSDSEGGDLDKHMGDLNGEEADKLDERLWGDDDEEEDEEEEDNKTEETGPGMDEEDSELVAKDDNLDSGNSNKDKSQQDKKEEKEEAEADDGGQGEDKINEQIDERDYDENEVDPYHGNQEKVPEPEALDLPDDLNLDSEDKNGGEDTDNEEGEEENPLEIKEKPEEAGHEAEERGETETDQNESQSPQEPEEGPSEDDKAEGEEEMDTGADDQDGDAAQHPEEHSEEQQQSVEEKDKEADEEGGENGPADQGFQPQEEEEREDSDTEEQVPEALERKEHASCGQTGVENMQNTQAMELAGAAPEKEQGKEEHGSGAADANQAEGHESNFIAQLASQKHTRKNTQSFKRKPGQADNERSMGDHNERVHKRLRTVDTDSHAEQGPAQQPQAQVEDADAFEHIKQGSDAYDAQTYDVASKEQQQSAKDSGKDQEEEEIEDTLMDTEEQEEFKAADVEQLKPEEIKSGTTAPLGFDEMEVEIQTVKTEEDQDPRTDKAHKETENEKPERSRESTIHTAHQFLMDTIFQPFLKDVNELRQELERQLEMWQPRESGNPEEEKVAAEMWQSYLILTAPLSQRLCEELRLILEPTQAAKLKGDYRTGKRLNIRKVIPYIASQFRKDKIWLRRTKPSKRQYQICLAIDDSSSMVDNHTKQLAFESLAVIGNALTLLEVGQIAVCSFGESVKLLHPFHEQFSDYSGSQILRLCKFQQKKTKIAQFLESVANMFAAAQQLSQNISSETAQLLLVVSDGRGLFLEGKERVLAAVQAARNANIFVIFVVLDNPSSRDSILDIKVPIFKGPGEMPEIRSYMEEFPFPYYIILRDVNALPETLSDALRQWFELVTASDHP.

Residue M1 is modified to N-acetylmethionine. AAA-ATPase protomer stretches follow at residues 307 to 591 (SVCK…TSKL), 659 to 978 (LIEQ…ASNP), 1048 to 1316 (KEPT…QEEI), and 1362 to 1616 (HIVW…NKMG). ATP is bound at residue 329-336 (GPIGCGKT). The interval 517 to 537 (SSVGCEQAPEEVSEARRENKR) is disordered. Residues 677–684 (GETGTGKT) and 1084–1091 (GETSVGKT) contribute to the ATP site. T1177 carries the phosphothreonine modification. 1390 to 1397 (GDTGCGKT) contacts ATP. K1683 is subject to N6-acetyllysine. 2 AAA-ATPase protomer regions span residues 1738–1995 (RLLR…AVFK) and 2053–2313 (MKCV…IYIS). ATP-binding positions include 1753-1760 (GSPGVGKT) and 2066-2073 (GPASVGKT). S1754 carries the post-translational modification Phosphoserine. The tract at residues 2418-4691 (SLRAHETWGD…EGEGMKDVSD (2274 aa)) is linker. The interval 3989–4008 (LVESDKEEQPDFLPRPTDGA) is disordered. A Phosphothreonine modification is found at T4212. S4538 bears the Phosphoserine mark. Disordered stretches follow at residues 4669-4688 (ATEF…GMKD) and 4700-5260 (EDTF…SRES). Residues 4702 to 4724 (TFQKGQEKDKEDPDSKSDIKGED) show a composition bias toward basic and acidic residues. Positions 4741-4757 (ELEEQEEDDEKSDSEGG) are enriched in acidic residues. A phosphoserine mark is found at S4752 and S4754. Basic and acidic residues predominate over residues 4758-4780 (DLDKHMGDLNGEEADKLDERLWG). Positions 4781–4794 (DDDEEEDEEEEDNK) are enriched in acidic residues. A compositionally biased stretch (basic and acidic residues) spans 4822-4834 (NKDKSQQDKKEEK). The span at 4835 to 4844 (EEAEADDGGQ) shows a compositional bias: acidic residues. A compositionally biased stretch (basic and acidic residues) spans 4845-4855 (GEDKINEQIDE). The segment covering 4877–4888 (EALDLPDDLNLD) has biased composition (acidic residues). Residue S4889 is modified to Phosphoserine. Residues 4896–4908 (EDTDNEEGEEENP) show a composition bias toward acidic residues. A Phosphothreonine modification is found at T4898. Basic and acidic residues predominate over residues 4909-4928 (LEIKEKPEEAGHEAEERGET). Phosphoserine occurs at positions 4937 and 4946. Acidic residues predominate over residues 4940 to 4966 (EPEEGPSEDDKAEGEEEMDTGADDQDG). The segment covering 4968–4989 (AAQHPEEHSEEQQQSVEEKDKE) has biased composition (basic and acidic residues). The span at 5007–5021 (QEEEEREDSDTEEQV) shows a compositional bias: acidic residues. S5015 is modified (phosphoserine). The span at 5033–5046 (CGQTGVENMQNTQA) shows a compositional bias: polar residues. Basic and acidic residues predominate over residues 5054-5064 (PEKEQGKEEHG). Positions 5088–5101 (KHTRKNTQSFKRKP) are enriched in basic residues. The segment covering 5105–5115 (DNERSMGDHNE) has biased composition (basic and acidic residues). The segment covering 5132–5141 (QGPAQQPQAQ) has biased composition (low complexity). Over residues 5181–5197 (QEEEEIEDTLMDTEEQE) the composition is skewed to acidic residues. 2 stretches are compositionally biased toward basic and acidic residues: residues 5198–5213 (EFKA…EEIK) and 5233–5260 (KTEE…SRES). Residues 5384–5583 (QICLAIDDSS…ALPETLSDAL (200 aa)) enclose the VWFA domain.

Belongs to the midasin family. As to quaternary structure, associates with pre-60S ribosomes in the nucleoplasm. Interacts (via its hexameric AAA ATPase ring) with the PELP1 complex (via PELP1); the interaction is regulated by SUMO conjugation of PELP1 and is crucial for recruitment of MDN1 to the pre-ribosomal particle. Interacts (via VWFA/MIDAS domain) with WDR12 (via UBL domain). Interacts (via VWFA/MIDAS domain) with NLE1 (via UBL domain).

The protein resides in the nucleus. It is found in the nucleolus. Its subcellular location is the nucleoplasm. The protein localises to the cytoplasm. Functionally, nuclear chaperone required for maturation and nuclear export of pre-60S ribosome subunits. Functions at successive maturation steps to remove ribosomal factors at critical transition points, first driving the exit of early pre-60S particles from the nucleolus and then driving late pre-60S particles from the nucleus. At an early stage in 60S maturation, mediates the dissociation of the PeBoW complex (PES1-BOP1-WDR12) from early pre-60S particles, rendering them competent for export from the nucleolus to the nucleoplasm. Subsequently recruited to the nucleoplasmic particles through interaction with SUMO-conjugated PELP1 complex. This binding is only possible if the 5S RNP at the central protuberance has undergone the rotation to complete its maturation. The protein is Midasin (MDN1) of Homo sapiens (Human).